A 460-amino-acid chain; its full sequence is Benzyl alcohol O-benzoyltransferase (460 aa).

Residues histidine 167 and aspartate 382 each act as proton acceptor in the active site.

It belongs to the plant acyltransferase family. As to expression, specifically expressed in flowers, mainly in the limb of flowers corollas, and, at low levels, in roots, stems, sepals and leaves.

It carries out the reaction benzyl alcohol + benzoyl-CoA = benzyl benzoate + CoA. The enzyme catalyses benzyl alcohol + acetyl-CoA = benzyl acetate + CoA. It catalyses the reaction 3-hydroxybenzyl alcohol + acetyl-CoA = 3-hydroxy-benzyl acetate + CoA. The catalysed reaction is 3-hydroxybenzyl alcohol + benzoyl-CoA = 3-hydroxy-benzyl benzoate + CoA. It carries out the reaction 2-phenylethanol + benzoyl-CoA = phenethyl benzoate + CoA. The enzyme catalyses (3Z)-hex-3-en-1-ol + benzoyl-CoA = (3Z)-hex-3-en-1-yl benzoate + CoA. It catalyses the reaction (2E)-geraniol + acetyl-CoA = (2E)-geranyl acetate + CoA. The catalysed reaction is butan-1-ol + benzoyl-CoA = butyl benzoate + CoA. It carries out the reaction (2E)-geraniol + benzoyl-CoA = (2E)-geranyl benzoate + CoA. The enzyme catalyses octan-1-ol + benzoyl-CoA = octyl benzoate + CoA. Its pathway is aromatic compound metabolism; benzoyl-CoA degradation. Involved in the production of volatile organic compounds (VOCs), including floral volatile benzenoids and phenylpropanoids (FVBP), in flowers of fragrant cultivars (e.g. cv. Mitchell and cv. V26), scent attracting pollinators (e.g. the night-active hawkmoth pollinator Manduca sexta). Acyltransferase that catalyzes the transfer of benzoyl and acetyl moieties to a large variety of potential substrate alcohols, and involved in the formation of volatile esters benzyl benzoate and phenylethyl benzoate from benzoyl-CoA. With acetyl-CoA, mainly active on benzyl alcohol, and, to a lower extent, on 3-hydroxybenzyl alcohol, geraniol, and 2-phenylethanol, but barely active on butanol, 1-octanol, 4-hydroxy-benzyl alcohol, 2-hexanol, cis-3-hexen-1-ol and linalool. With benzoyl-CoA, mainly active on benzyl alcohol, but also efficient on several substrates, including 3-hydroxybenzyl alcohol, 2-phenylethanol, geraniol, butanol, cis-3-hexen-1-ol and 1-octanol. In Petunia hybrida (Petunia), this protein is Benzyl alcohol O-benzoyltransferase.